We begin with the raw amino-acid sequence, 254 residues long: 5-oxoprolinase subunit A (254 aa).

This sequence belongs to the LamB/PxpA family. As to quaternary structure, forms a complex composed of PxpA, PxpB and PxpC.

The catalysed reaction is 5-oxo-L-proline + ATP + 2 H2O = L-glutamate + ADP + phosphate + H(+). In terms of biological role, catalyzes the cleavage of 5-oxoproline to form L-glutamate coupled to the hydrolysis of ATP to ADP and inorganic phosphate. This is 5-oxoprolinase subunit A from Burkholderia orbicola (strain MC0-3).